Consider the following 557-residue polypeptide: 6-methylpretetramide 4-monooxygenase (557 aa).

FAD-binding positions include 9–38 (QVLI…VIDR) and 278–288 (MRSGRCFVAGD). A disordered region spans residues 530 to 557 (LPEDTAPGAGDSAGRPAPDGTRRGVTTE).

This sequence belongs to the PheA/TfdB FAD monooxygenase family. The cofactor is FAD.

It catalyses the reaction 6-methylpretetramide + NADPH + O2 + 2 H(+) = 4-hydroxy-6-methylpretetramide + NADP(+) + H2O. It carries out the reaction 4-hydroxy-6-methylpretetramide + NADPH + O2 = 4-dedimethylamino-4-oxo-anhydrotetracycline + NADP(+) + H2O. It participates in antibiotic biosynthesis; oxytetracycline biosynthesis. In terms of biological role, involved in the biosynthesis of the tetracycline antibiotic, oxytetracycline. Catalyzes the double hydroxylation of 6-methylpretetramide to yield 4-keto-anhydrotetracycline, via the insertion of oxygen atoms at the C-12a and C-4 positions of 6-pretetramid. In Streptomyces rimosus, this protein is 6-methylpretetramide 4-monooxygenase.